Consider the following 425-residue polypeptide: Enolase (425 aa).

The disordered stretch occupies residues 31 to 54 (TGSAIVPSGASTGEKEAVELRDSD). The span at 43–54 (GEKEAVELRDSD) shows a compositional bias: basic and acidic residues. Q162 contacts (2R)-2-phosphoglycerate. E204 functions as the Proton donor in the catalytic mechanism. Positions 241, 285, and 312 each coordinate Mg(2+). 4 residues coordinate (2R)-2-phosphoglycerate: K337, R366, S367, and K388. Catalysis depends on K337, which acts as the Proton acceptor.

The protein belongs to the enolase family. It depends on Mg(2+) as a cofactor.

It is found in the cytoplasm. The protein localises to the secreted. It localises to the cell surface. It carries out the reaction (2R)-2-phosphoglycerate = phosphoenolpyruvate + H2O. It functions in the pathway carbohydrate degradation; glycolysis; pyruvate from D-glyceraldehyde 3-phosphate: step 4/5. Catalyzes the reversible conversion of 2-phosphoglycerate (2-PG) into phosphoenolpyruvate (PEP). It is essential for the degradation of carbohydrates via glycolysis. The protein is Enolase of Gloeobacter violaceus (strain ATCC 29082 / PCC 7421).